The sequence spans 207 residues: Large ribosomal subunit protein uL4 (207 aa).

The segment at 54–76 is disordered; the sequence is RSAVRGGGRKPWRQKGTGRARQG. Residues 60 to 71 are compositionally biased toward basic residues; the sequence is GGRKPWRQKGTG.

This sequence belongs to the universal ribosomal protein uL4 family. As to quaternary structure, part of the 50S ribosomal subunit.

Functionally, one of the primary rRNA binding proteins, this protein initially binds near the 5'-end of the 23S rRNA. It is important during the early stages of 50S assembly. It makes multiple contacts with different domains of the 23S rRNA in the assembled 50S subunit and ribosome. In terms of biological role, forms part of the polypeptide exit tunnel. The protein is Large ribosomal subunit protein uL4 of Staphylococcus haemolyticus (strain JCSC1435).